The primary structure comprises 1172 residues: MLEGCILAVSSQSKSAKAITNNSVPGAPNRISFAKLREPLEVPGLLDVQTESFDWLIGADSWRQRATARGDVNPTGGLEEVLTELSPIEDFSGSMSLSFSDPRFDEVKAPVDECKDKDMTYAAPLFVTAEFINNNTGEIKSQTVFMGDFPMMTEKGTFIINGTERVVVSQLVRSPGVYFDESIDKSTEKTLHSVKVIPGRGAWLEFDVDKRDTVGVRIDRKRRQPVTVLLKALGWTNEQITERFGFSEIMMSTLEKDNTAGTDEALLDIYRKLRPGEPPTKESAQTLLENLFFKEKRYDLARVGRYKVNKKLGLNTDKPITSSTLTEEDVVATIEYLVRLHEGQATMTVPGGVEVPVEVDDIDHFGNRRLRTVGELIQNQIRVGLSRMERVVRERMTTQDVEAITPQTLINIRPVVAAIKEFFGTSQLSQFMDQNNPLSGLTHKRRLSALGPGGLSRERAGLEVRDVHSSHYGRMCPIETPEGPNIGLIGSLSVYARVNPFGFIETPYRKVENGVVTDQIDYLTADEEDRHVVAQANSPLDDEGHFTEDRVLVRRKGGEVEFVSATEVDYMDVSPRQMVSVATAMIPFLEHDDANRALMGANMQRQAVPLVRSEAPLVGTGMELRAAIDAGDVVVSEKAGVVEEVSADYITVMADDGTRHTYRMRKFARSNHGTCANQRPIVDAGQRVEAGQVVADGPCTQNGEMALGKNLLVAIMPWEGHNYEDAIILSNRLVEEDVLTSIHIEEHEIDARDTKLGAEEITRDIPNVSDEVLADLDERGIVRIGAEVRDGDILVGKVTPKGETELTPEERLLRAIFGEKAREVRDTSLKVPHGESGKVIGIRVFSREDDDELPAGVNELVRVYVAQKRKISDGDKLAGRHGNKGVIGKILPVEDMPFLPDGTPVDIILNTHGVPRRMNIGQILETHLGWVAKAGWNINVAGADGVPDWAEKLPEELYSAPSDSIVATPVFDGARENELSGLLASTLPNRDGDVMVNEDGKAELFDGRSGEPFPYPVTVGYMYILKLHHLVDDKIHARSTGPYSMITQQPLGGKAQFGGQRFGEMECWAMQAYGAAYTLQELLTIKSDDTVGRVKVYEAIVKGENIPEPGIPESFKVLLKELQSLCLNVEVLSSDGAAIEMRDGDDEDLERAAANLGINLSRNESASVEDLA.

Belongs to the RNA polymerase beta chain family. The RNAP catalytic core consists of 2 alpha, 1 beta, 1 beta' and 1 omega subunit. When a sigma factor is associated with the core the holoenzyme is formed, which can initiate transcription.

It carries out the reaction RNA(n) + a ribonucleoside 5'-triphosphate = RNA(n+1) + diphosphate. DNA-dependent RNA polymerase catalyzes the transcription of DNA into RNA using the four ribonucleoside triphosphates as substrates. In Mycobacterium sp. (strain JLS), this protein is DNA-directed RNA polymerase subunit beta.